A 333-amino-acid chain; its full sequence is Extracellular globin (333 aa).

The signal sequence occupies residues M1–A18. Globin domains follow at residues C25 to R167 and C174 to K318. Positions 82 and 114 each coordinate heme b. The N-linked (GlcNAc...) asparagine glycan is linked to N216. Heme b contacts are provided by Q231 and H263. The interval D314–H333 is disordered.

The protein belongs to the globin family. In terms of assembly, homooctamer.

It is found in the secreted. The protein localises to the extracellular space. This chain is Extracellular globin, found in Pseudoterranova decipiens (Sealworm).